A 59-amino-acid polypeptide reads, in one-letter code: Large ribosomal subunit protein bL32 (59 aa).

The protein belongs to the bacterial ribosomal protein bL32 family.

The protein is Large ribosomal subunit protein bL32 of Malacoplasma penetrans (strain HF-2) (Mycoplasma penetrans).